Reading from the N-terminus, the 53-residue chain is Photosystem II reaction center protein K (53 aa).

The propeptide occupies 1-16; it reads MFYTNVETLLNTNCFA. The helical transmembrane segment at 28 to 48 threads the bilayer; that stretch reads LVDVLPIIPLLFLLLAFVWQA.

It belongs to the PsbK family. In terms of assembly, PSII is composed of 1 copy each of membrane proteins PsbA, PsbB, PsbC, PsbD, PsbE, PsbF, PsbH, PsbI, PsbJ, PsbK, PsbL, PsbM, PsbT, PsbY, PsbZ, Psb30/Ycf12, at least 3 peripheral proteins of the oxygen-evolving complex and a large number of cofactors. It forms dimeric complexes.

The protein resides in the plastid. It localises to the chloroplast thylakoid membrane. Functionally, one of the components of the core complex of photosystem II (PSII). PSII is a light-driven water:plastoquinone oxidoreductase that uses light energy to abstract electrons from H(2)O, generating O(2) and a proton gradient subsequently used for ATP formation. It consists of a core antenna complex that captures photons, and an electron transfer chain that converts photonic excitation into a charge separation. This chain is Photosystem II reaction center protein K, found in Euglena anabaena (Euglenaria anabaena).